Consider the following 298-residue polypeptide: Serpentine receptor class delta-34 (298 aa).

The next 6 helical transmembrane spans lie at 10–30, 54–74, 99–119, 158–178, 207–227, and 242–262; these read SSIM…FTQV, ACFF…FAIP, MILL…VITY, LATN…IVFI, LTIQ…AHLI, and VLYM…IVTI.

Belongs to the nematode receptor-like protein srd family.

Its subcellular location is the membrane. In Caenorhabditis elegans, this protein is Serpentine receptor class delta-34 (srd-34).